The primary structure comprises 135 residues: uncharacterized protein (135 aa).

This is an uncharacterized protein from Saccharomyces cerevisiae (strain ATCC 204508 / S288c) (Baker's yeast).